The following is a 36-amino-acid chain: Photosystem I reaction center subunit VIII (36 aa).

A helical membrane pass occupies residues 9-29; that stretch reads ILTPVVTLVFPGLMFALFFVL.

The protein belongs to the PsaI family.

It localises to the plastid. It is found in the chloroplast thylakoid membrane. In terms of biological role, may help in the organization of the PsaL subunit. The sequence is that of Photosystem I reaction center subunit VIII from Emiliania huxleyi (Coccolithophore).